The sequence spans 348 residues: D-alanine--D-alanine ligase (348 aa).

The ATP-grasp domain maps to 132 to 334; that stretch reads KRVLESIGIP…YPDLIEELVT (203 aa). An ATP-binding site is contributed by 162–217; it reads LARLTFPIFVKPANMGSSVGISKAQTKVELRKAIQLALTYDSRVLIEQGVVAREIE. The Mg(2+) site is built by aspartate 288, glutamate 301, and asparagine 303.

Belongs to the D-alanine--D-alanine ligase family. Requires Mg(2+) as cofactor. Mn(2+) is required as a cofactor.

The protein localises to the cytoplasm. It catalyses the reaction 2 D-alanine + ATP = D-alanyl-D-alanine + ADP + phosphate + H(+). The protein operates within cell wall biogenesis; peptidoglycan biosynthesis. In terms of biological role, cell wall formation. In Streptococcus pyogenes serotype M18 (strain MGAS8232), this protein is D-alanine--D-alanine ligase.